The following is a 54-amino-acid chain: Large ribosomal subunit protein bL33B (54 aa).

Belongs to the bacterial ribosomal protein bL33 family.

This chain is Large ribosomal subunit protein bL33B, found in Mycolicibacterium vanbaalenii (strain DSM 7251 / JCM 13017 / BCRC 16820 / KCTC 9966 / NRRL B-24157 / PYR-1) (Mycobacterium vanbaalenii).